The following is a 620-amino-acid chain: Probable potassium transport system protein Kup 1 (620 aa).

12 helical membrane-spanning segments follow: residues 7 to 27 (GIGLLVSAIGVVFGDIGTSPL), 50 to 70 (VLSLVFWTVMLLVTVKYVIVI), 102 to 122 (MMLGVIAAALFYGDSMITPAI), 136 to 156 (PDLKAYVVPITAVVLTLLFAI), 168 to 188 (FGPVMCMWFLTLALLGIANIV), 211 to 231 (LMSFYALGSVVLAVTGGEALY), 246 to 266 (WFGLVLPALLLNYFGQGALLI), 284 to 304 (MVVPMVALATLATVIASQAVI), 336 to 356 (IYVPFTNWTLYFAVMALVVGF), 368 to 388 (IAVTGTMMIDTILVSFVAALL), 393 to 413 (PVVVAVVIGTLLLLDFAFFAA), and 415 to 435 (IIKVAQGGWFPLFIGFISFTV).

This sequence belongs to the HAK/KUP transporter (TC 2.A.72) family.

The protein resides in the cell inner membrane. It catalyses the reaction K(+)(in) + H(+)(in) = K(+)(out) + H(+)(out). Functionally, transport of potassium into the cell. Likely operates as a K(+):H(+) symporter. The polypeptide is Probable potassium transport system protein Kup 1 (Rhodopseudomonas palustris (strain ATCC BAA-98 / CGA009)).